A 344-amino-acid chain; its full sequence is uncharacterized protein (344 aa).

An N-terminal signal peptide occupies residues 1 to 27; the sequence is MKKWLIIAVSLAIAIVLFMYTKGEAKA. The GH18 domain occupies 29-344; that stretch reads GMTVGYTTGD…FWKAIRKGTK (316 aa). Residue glutamate 140 is the Proton donor of the active site.

Belongs to the glycosyl hydrolase 18 family.

This is an uncharacterized protein from Bacillus subtilis (strain 168).